Reading from the N-terminus, the 610-residue chain is Zinc finger protein 823 (610 aa).

Residues 4-97 form the KRAB domain; it reads VAFEDVAVNF…VNKNTPRVNP (94 aa). C2H2-type zinc fingers lie at residues 164-186, 192-214, 220-242, 248-270, 276-298, 304-326, 332-354, 360-382, 388-410, and 416-438; these read FDCK…MAAH, YKCK…ERTH, YECK…ERIH, YECK…ERTH, YKCT…ERTH, YACK…MIRH, HKCK…ETTH, YECK…MITH, QKCK…ERTH, and YQCK…EATH. A C2H2-type 11; atypical zinc finger spans residues 444–465; it reads YKCQCGKAFSDLSSFQNHETTH. C2H2-type zinc fingers lie at residues 471–493, 499–521, 527–549, 555–577, and 583–605; these read YECK…KRTH, YECK…ERIH, and YECL…EKTH.

It belongs to the krueppel C2H2-type zinc-finger protein family.

It localises to the nucleus. Functionally, may be involved in transcriptional regulation. The protein is Zinc finger protein 823 (ZNF823) of Homo sapiens (Human).